The chain runs to 630 residues: Multidrug transporter TPO3 (630 aa).

The segment covering 1–35 (MVDQESLVSFSSETSQSINSDIDIESQQQPRQYIP) has biased composition (polar residues). Disordered regions lie at residues 1–46 (MVDQ…KERL) and 107–157 (TSTA…NQQP). Basic and acidic residues predominate over residues 37–46 (NEKDGNKERL). Over residues 125-137 (RRSQNIAASSNSS) the composition is skewed to low complexity. The N-linked (GlcNAc...) asparagine glycan is linked to asparagine 135. The next 12 helical transmembrane spans lie at 190 to 210 (ILSCLVICVAYGSACITGGLF), 222 to 242 (AAILSCSLMVIGFSLGPLIWS), 252 to 272 (LAYFISMGLYTIFNIPCALSP), 282 to 302 (FLCGVFSSSGLCLVGGSIADM), 312 to 332 (IAFFAFAPYTGPIIGPLVNGF), 342 to 362 (LIFWINMAFAGVMWIIVAFIP), 423 to 443 (FYVCLIYSLLYAFFFAFPVVF), 453 to 473 (LIGLMFIPILIGATMALATTF), 494 to 514 (LFGAMIGAPFAAAALWILGAT), 519 to 539 (IIWVGPASSGLAFGYGMVLIY), 553 to 575 (YASSALATKVFLRSAGGAAFPLF), and 587 to 607 (WASWLLAFISTAMILLPFGFY).

It belongs to the major facilitator superfamily. DHA1 family. Polyamines/proton antiporter (TC 2.A.1.2.16) subfamily.

The protein resides in the cell membrane. Cell membrane polyamine/proton antiporter, involved in the detoxification of excess polyamines in the cytoplasm. Involved in the resistance to the imidazole antifungal drugs tioconazole, miconazole, clotrimazole and ketoconazole; to the triazole fluconazole; but not to the antifungals flucytosine or amphotericin B. Plays a role in spermine homeostasis, but spermine accumulation in response to clotrimazole is independent of TPO3. The chain is Multidrug transporter TPO3 from Candida glabrata (strain ATCC 2001 / BCRC 20586 / JCM 3761 / NBRC 0622 / NRRL Y-65 / CBS 138) (Yeast).